The following is a 68-amino-acid chain: Alpha-conotoxin-like Lt1.2 (68 aa).

An N-terminal signal peptide occupies residues 1–21 (MGMRMMFIMFMLVVLATTVDT). The propeptide occupies 22–48 (FTSDRALDAMNAAASNKASRLIALAVR). 2 disulfide bridges follow: Cys50–Cys56 and Cys51–Cys64. Residues 52–54 (ARA) form a lacks the Ser-Xaa-Pro motif that is crucial for potent interaction with nAChR region. Gly65 carries the glycine amide modification.

This sequence belongs to the conotoxin A superfamily. Expressed by the venom duct.

Its subcellular location is the secreted. Alpha-conotoxins act on postsynaptic membranes, they bind to the nicotinic acetylcholine receptors (nAChR) and thus inhibit them. Has a distinct nAChR binding mode from other alpha-conotoxins, due to a different three residue motif (Ala-Xaa-Ala instead of the conserved Ser-Xaa-Pro motif). The chain is Alpha-conotoxin-like Lt1.2 from Conus litteratus (Lettered cone).